Reading from the N-terminus, the 362-residue chain is Aminomethyltransferase (362 aa).

This sequence belongs to the GcvT family. The glycine cleavage system is composed of four proteins: P, T, L and H.

The enzyme catalyses N(6)-[(R)-S(8)-aminomethyldihydrolipoyl]-L-lysyl-[protein] + (6S)-5,6,7,8-tetrahydrofolate = N(6)-[(R)-dihydrolipoyl]-L-lysyl-[protein] + (6R)-5,10-methylene-5,6,7,8-tetrahydrofolate + NH4(+). In terms of biological role, the glycine cleavage system catalyzes the degradation of glycine. In Bacillus subtilis (strain 168), this protein is Aminomethyltransferase.